The sequence spans 287 residues: Shikimate kinase 3, chloroplastic (287 aa).

A chloroplast-targeting transit peptide spans 1 to 57 (MDAGVGLRAKPGAWAGLGNPRRSSTARVPVRFAVEKFAQPLVLGSDRRSCGAKLKVS). 98-105 (GMMGSGKT) serves as a coordination point for ATP. Position 105 (threonine 105) interacts with Mg(2+). Positions 123, 148, and 170 each coordinate substrate. Arginine 209 serves as a coordination point for ATP.

The protein belongs to the shikimate kinase family. Mg(2+) serves as cofactor. As to expression, expressed in panicles.

It localises to the plastid. It is found in the chloroplast. It carries out the reaction shikimate + ATP = 3-phosphoshikimate + ADP + H(+). The protein operates within metabolic intermediate biosynthesis; chorismate biosynthesis; chorismate from D-erythrose 4-phosphate and phosphoenolpyruvate: step 5/7. In terms of biological role, catalyzes the specific phosphorylation of the 3-hydroxyl group of shikimic acid using ATP as a cosubstrate. The protein is Shikimate kinase 3, chloroplastic (SK3) of Oryza sativa subsp. japonica (Rice).